Consider the following 400-residue polypeptide: Serine/threonine transporter SstT (400 aa).

Helical transmembrane passes span 14–34, 48–68, 76–96, 136–156, 177–197, 211–231, 293–313, and 334–354; these read IIIAIILGIGVALLFPTVTPY, SVAPILAFVLVLSSIANFQVG, VLLLYVVGMLLAAFSAVIASL, AISEANFIGILAWAIGLGLAM, IIHKVIAFAPVGIFGLVAVTF, LLAVLLGTMLFVALVINPILV, LAGAAVTITVLTLATVHTLGI, and ASGVAGGSLLLIPVACSLFGI.

Belongs to the dicarboxylate/amino acid:cation symporter (DAACS) (TC 2.A.23) family.

The protein localises to the cell inner membrane. It carries out the reaction L-serine(in) + Na(+)(in) = L-serine(out) + Na(+)(out). It catalyses the reaction L-threonine(in) + Na(+)(in) = L-threonine(out) + Na(+)(out). Involved in the import of serine and threonine into the cell, with the concomitant import of sodium (symport system). This Acinetobacter baumannii (strain SDF) protein is Serine/threonine transporter SstT.